The primary structure comprises 129 residues: Snaclec coagulation factor IX/factor X-binding protein subunit B3 (129 aa).

An N-terminal signal peptide occupies residues 1–8 (LSLSGTAA). Disulfide bonds link C10-C21, C38-C127, and C104-C119. The C-type lectin domain occupies 17–128 (YEGHCYKPFN…CRMMANFVCE (112 aa)).

It belongs to the snaclec family. In terms of assembly, heterodimer of subunits A and B3; disulfide-linked. As to expression, expressed by the venom gland.

Its subcellular location is the secreted. In terms of biological role, anticoagulant protein which binds to the gamma-carboxyglutamic acid-domain regions of factors IX (F9) and factor X (F10) in the presence of calcium with a 1 to 1 stoichiometry. In Trimeresurus stejnegeri (Chinese green tree viper), this protein is Snaclec coagulation factor IX/factor X-binding protein subunit B3.